Here is a 371-residue protein sequence, read N- to C-terminus: Hsc70-interacting protein (371 aa).

Positions 38-80 (MGGKVPPATHKAKSEENTKEEKRDKTTEENIKTEELSSEESDL) are disordered. Positions 49-72 (AKSEENTKEEKRDKTTEENIKTEE) are enriched in basic and acidic residues. TPR repeat units lie at residues 113-146 (ANEKKGAAIEALNDGELQKAIDLFTDAIKLNPRL), 147-180 (AILYAKRASVFVKLQKPNAAIRDCDRAIEINPDS), and 181-214 (AQPYKWRGKAHRLLGHWEEAAHDLALACKLDYDE). Basic and acidic residues predominate over residues 255 to 271 (KAREEHERAQREEEARR). The interval 255 to 296 (KAREEHERAQREEEARRQSGSQYGSFPGGFPGGMPGNFPGGM) is disordered. Gly residues predominate over residues 280-296 (FPGGFPGGMPGNFPGGM). Residues 321–360 (DPEVLAAMQDPEVMVAFQDVAQNPSNMSKYQSNPKVMNLI) form the STI1 domain. At S348 the chain carries Phosphoserine; by GRK5. N6-acetyllysine occurs at positions 355 and 362.

It belongs to the FAM10 family. As to quaternary structure, homotetramer. Interacts with HSC70 as well as DNAJ homologs and HSP90. Interacts (via the C-terminus 302- 318 AA) with GRK5.

It is found in the cytoplasm. Its function is as follows. One HIP oligomer binds the ATPase domains of at least two HSC70 molecules dependent on activation of the HSC70 ATPase by HSP40. Stabilizes the ADP state of HSC70 that has a high affinity for substrate protein. Through its own chaperone activity, it may contribute to the interaction of HSC70 with various target proteins. The protein is Hsc70-interacting protein (St13) of Mus musculus (Mouse).